Reading from the N-terminus, the 394-residue chain is Probable malate--CoA ligase subunit beta (394 aa).

The ATP-grasp domain occupies 9–244 (KELLARHGVH…KSQEDPRETF (236 aa)). ATP-binding residues include Lys-46, Glu-99, Val-102, and Glu-107. The Mg(2+) site is built by Asn-199 and Asp-213.

The protein belongs to the succinate/malate CoA ligase beta subunit family. As to quaternary structure, heterotetramer of two alpha and two beta subunits. Mg(2+) serves as cofactor.

It catalyses the reaction (S)-malate + ATP + CoA = (S)-malyl-CoA + ADP + phosphate. It functions in the pathway one-carbon metabolism; formaldehyde assimilation via serine pathway. This Mesorhizobium japonicum (strain LMG 29417 / CECT 9101 / MAFF 303099) (Mesorhizobium loti (strain MAFF 303099)) protein is Probable malate--CoA ligase subunit beta (mtkA).